Here is a 140-residue protein sequence, read N- to C-terminus: MNFLRQSFGITKQLASQAIQCSYETAVRGMASLQQMHRSGPHIKTRPPRQPLDGKPFAKGVVLKTLIKKPKKPNSANRKCVLVRLSTGKEMVAYIPGIGHNLQEHNIVLCRVGRLQDVPGVKLKAVRGVYDLAHVVKKSQ.

Residues 1–30 (MNFLRQSFGITKQLASQAIQCSYETAVRGM) constitute a mitochondrion transit peptide.

This sequence belongs to the universal ribosomal protein uS12 family.

It localises to the mitochondrion. This chain is Small ribosomal subunit protein uS12m (tko), found in Drosophila melanogaster (Fruit fly).